We begin with the raw amino-acid sequence, 344 residues long: Protein pelota homolog (344 aa).

This sequence belongs to the eukaryotic release factor 1 family. Pelota subfamily. In terms of assembly, monomer. The cofactor is a divalent metal cation.

The protein resides in the cytoplasm. Functionally, may function in recognizing stalled ribosomes, interact with stem-loop structures in stalled mRNA molecules, and effect endonucleolytic cleavage of the mRNA. May play a role in the release non-functional ribosomes and degradation of damaged mRNAs. Has endoribonuclease activity. This Saccharolobus islandicus (strain M.16.27) (Sulfolobus islandicus) protein is Protein pelota homolog.